The chain runs to 136 residues: Cytochrome c-550 (136 aa).

The signal sequence occupies residues 1–28; it reads MTKLTFGALVALAMTAAASTAMSSKAMA. Heme c-binding residues include Cys41, Cys44, His45, and Met107.

In terms of processing, binds 1 heme c group covalently per subunit. Post-translationally, the N-terminus is blocked.

Its subcellular location is the periplasm. In terms of biological role, plays a role in bacteroid respiration under conditions of oxygen limitation. Required for electron-transfer during denitrification. This chain is Cytochrome c-550 (cycA), found in Bradyrhizobium diazoefficiens (strain JCM 10833 / BCRC 13528 / IAM 13628 / NBRC 14792 / USDA 110).